Reading from the N-terminus, the 329-residue chain is Cytosolic arginine sensor for mTORC1 subunit 2 (329 aa).

2 ACT domains span residues 72–139 (ADAT…MHTL) and 262–322 (ELWK…NALQ).

Belongs to the GATS family. As to quaternary structure, may form homodimers and heterodimers.

The protein localises to the cytoplasm. Its subcellular location is the cytosol. Its function is as follows. Functions as a negative regulator of the TORC1 signaling pathway. In Xenopus laevis (African clawed frog), this protein is Cytosolic arginine sensor for mTORC1 subunit 2.